A 272-amino-acid polypeptide reads, in one-letter code: MNRIDKTLEKLKANRKKMLSPYITAGDPYPELTVSLMHQLVKSGADVLELGIPFSDPMAEGPVIQRAMERALAHSIHCDDVLNMVRQFRKTDTETPVILMGYLNPIEQYGYDLFAQQAVEAGVDGTILVDLPPEEADGVSRVWQKHGLYSIYLCSPTTSAERMNFINQHANGYLYYVSLKGVTGSDALKLPELKAQYLQRKAQSKLPLMVGFGIKTPEMAAQVAEFADGVIVGAALINEIIEAYEAKKDPLQASGALLSSMRQAIDNIGSMV.

Active-site proton acceptor residues include E49 and E60.

Belongs to the TrpA family. In terms of assembly, tetramer of two alpha and two beta chains.

It catalyses the reaction (1S,2R)-1-C-(indol-3-yl)glycerol 3-phosphate + L-serine = D-glyceraldehyde 3-phosphate + L-tryptophan + H2O. It functions in the pathway amino-acid biosynthesis; L-tryptophan biosynthesis; L-tryptophan from chorismate: step 5/5. Functionally, the alpha subunit is responsible for the aldol cleavage of indoleglycerol phosphate to indole and glyceraldehyde 3-phosphate. This is Tryptophan synthase alpha chain from Legionella pneumophila (strain Lens).